Consider the following 170-residue polypeptide: Large ribosomal subunit protein uL16 (170 aa).

This sequence belongs to the universal ribosomal protein uL16 family.

This is Large ribosomal subunit protein uL16 from Methanospirillum hungatei JF-1 (strain ATCC 27890 / DSM 864 / NBRC 100397 / JF-1).